The following is a 358-amino-acid chain: Chorismate synthase (358 aa).

Arg-48 serves as a coordination point for NADP(+). FMN contacts are provided by residues 125–127 (RAS), Ser-277, 292–296 (KPIPS), and Arg-318.

Belongs to the chorismate synthase family. As to quaternary structure, homotetramer. FMNH2 is required as a cofactor.

The catalysed reaction is 5-O-(1-carboxyvinyl)-3-phosphoshikimate = chorismate + phosphate. Its pathway is metabolic intermediate biosynthesis; chorismate biosynthesis; chorismate from D-erythrose 4-phosphate and phosphoenolpyruvate: step 7/7. Its function is as follows. Catalyzes the anti-1,4-elimination of the C-3 phosphate and the C-6 proR hydrogen from 5-enolpyruvylshikimate-3-phosphate (EPSP) to yield chorismate, which is the branch point compound that serves as the starting substrate for the three terminal pathways of aromatic amino acid biosynthesis. This reaction introduces a second double bond into the aromatic ring system. The protein is Chorismate synthase of Desulfatibacillum aliphaticivorans.